Reading from the N-terminus, the 201-residue chain is Aminoglycoside N(6')-acetyltransferase type 1 (201 aa).

Residues 25 to 192 form the N-acetyltransferase domain; it reads VTLRLMTEHD…PAVYMVQTRQ (168 aa). Substrate-binding residues include W51 and D154. N159 is a binding site for acetyl-CoA.

As to quaternary structure, homodimer.

It carries out the reaction kanamycin B + acetyl-CoA = N(6')-acetylkanamycin B + CoA + H(+). Its function is as follows. Catalyzes the transfer of an acetyl group from acetyl-CoA to the 6'-amino group of aminoglycoside molecules conferring resistance to antibiotics containing the purpurosamine ring including amikacin and kanamycin. The polypeptide is Aminoglycoside N(6')-acetyltransferase type 1 (aacA4) (Serratia marcescens).